A 754-amino-acid polypeptide reads, in one-letter code: 1,4-alpha-glucan branching enzyme GlgB (754 aa).

Residue Asp431 is the Nucleophile of the active site. Glu484 (proton donor) is an active-site residue.

The protein belongs to the glycosyl hydrolase 13 family. GlgB subfamily. In terms of assembly, monomer.

The catalysed reaction is Transfers a segment of a (1-&gt;4)-alpha-D-glucan chain to a primary hydroxy group in a similar glucan chain.. It participates in glycan biosynthesis; glycogen biosynthesis. Catalyzes the formation of the alpha-1,6-glucosidic linkages in glycogen by scission of a 1,4-alpha-linked oligosaccharide from growing alpha-1,4-glucan chains and the subsequent attachment of the oligosaccharide to the alpha-1,6 position. This Prochlorococcus marinus (strain AS9601) protein is 1,4-alpha-glucan branching enzyme GlgB.